We begin with the raw amino-acid sequence, 242 residues long: Probable transcriptional regulatory protein Bxeno_A1185 (242 aa).

The protein belongs to the TACO1 family.

The protein localises to the cytoplasm. This Paraburkholderia xenovorans (strain LB400) protein is Probable transcriptional regulatory protein Bxeno_A1185.